A 559-amino-acid polypeptide reads, in one-letter code: Urocanate hydratase (559 aa).

NAD(+) is bound by residues 54-55 (GG), Gln132, 178-180 (GMG), Glu198, Arg203, 244-245 (NA), 265-269 (QTSAH), 275-276 (YL), and Tyr324. Residue Cys412 is part of the active site. Residue Gly494 participates in NAD(+) binding.

The protein belongs to the urocanase family. NAD(+) is required as a cofactor.

It is found in the cytoplasm. It catalyses the reaction 4-imidazolone-5-propanoate = trans-urocanate + H2O. It participates in amino-acid degradation; L-histidine degradation into L-glutamate; N-formimidoyl-L-glutamate from L-histidine: step 2/3. Its function is as follows. Catalyzes the conversion of urocanate to 4-imidazolone-5-propionate. The protein is Urocanate hydratase of Photorhabdus laumondii subsp. laumondii (strain DSM 15139 / CIP 105565 / TT01) (Photorhabdus luminescens subsp. laumondii).